Reading from the N-terminus, the 388-residue chain is Methylthioribose-1-phosphate isomerase (388 aa).

The Proton donor role is filled by Asp-258.

The protein belongs to the eIF-2B alpha/beta/delta subunits family. MtnA subfamily.

The protein resides in the cytoplasm. The protein localises to the nucleus. The catalysed reaction is 5-(methylsulfanyl)-alpha-D-ribose 1-phosphate = 5-(methylsulfanyl)-D-ribulose 1-phosphate. It functions in the pathway amino-acid biosynthesis; L-methionine biosynthesis via salvage pathway; L-methionine from S-methyl-5-thio-alpha-D-ribose 1-phosphate: step 1/6. Catalyzes the interconversion of methylthioribose-1-phosphate (MTR-1-P) into methylthioribulose-1-phosphate (MTRu-1-P). This is Methylthioribose-1-phosphate isomerase from Sordaria macrospora (strain ATCC MYA-333 / DSM 997 / K(L3346) / K-hell).